The primary structure comprises 450 residues: Putative zinc metalloprotease PA3649 (450 aa).

Position 21 (His-21) interacts with Zn(2+). Residue Glu-22 is part of the active site. A Zn(2+)-binding site is contributed by His-25. The chain crosses the membrane as a helical span at residues 97 to 119; that stretch reads IAIVAAGPIANFLLAILFFWVVA. The PDZ domain occupies 199–291; that stretch reads GWLKGEDNPD…VLDVALELAV (93 aa). The chain crosses the membrane as a helical span at residues 425–444; that stretch reads AWGMQIGISLVVGVMLLALV.

Belongs to the peptidase M50B family. It depends on Zn(2+) as a cofactor.

It localises to the cell inner membrane. This Pseudomonas aeruginosa (strain ATCC 15692 / DSM 22644 / CIP 104116 / JCM 14847 / LMG 12228 / 1C / PRS 101 / PAO1) protein is Putative zinc metalloprotease PA3649.